The primary structure comprises 252 residues: Vacuolar-sorting protein dot2 (252 aa).

This sequence belongs to the SNF8 family. Component of the endosomal sorting complex required for transport II (ESCRT-II).

It localises to the cytoplasm. It is found in the nucleus. Its subcellular location is the endosome membrane. In terms of biological role, component of the endosomal sorting complex required for transport II (ESCRT-II), which is required for multivesicular body (MVB) formation and sorting of endosomal cargo proteins into MVBs. The MVB pathway mediates delivery of transmembrane proteins into the lumen of the lysosome for degradation. The ESCRT-II complex is probably involved in the recruitment of the ESCRT-III complex. Negatively regulates meiotic spindle pole body maturation via indirect regulation of the pcp1 gene. Required for efficient entry into pre-meiotic S phase. This is Vacuolar-sorting protein dot2 (dot2) from Schizosaccharomyces pombe (strain 972 / ATCC 24843) (Fission yeast).